The chain runs to 353 residues: Rhodopsin (353 aa).

The Extracellular portion of the chain corresponds to 1–36 (MNGTEGPYFYVPMVNTSGIVRSPYEYPQYYLVNPAA). N-linked (GlcNAc...) asparagine glycans are attached at residues Asn2 and Asn15. The chain crosses the membrane as a helical span at residues 37–61 (YAALGAYMFLLILVGFPINFLTLYV). Over 62–73 (TIEHKKLRTPLN) the chain is Cytoplasmic. A helical transmembrane segment spans residues 74-96 (YILLNLAVADLFMVFGGFTTTMY). Topologically, residues 97-110 (TSMHGYFVLGRLGC) are extracellular. A disulfide bridge connects residues Cys110 and Cys187. The chain crosses the membrane as a helical span at residues 111–133 (NIEGFFATLGGEIALWSLVVLAI). The short motif at 134 to 136 (ERW) is the 'Ionic lock' involved in activated form stabilization element. Topologically, residues 134-152 (ERWVVVCKPISNFRFGENH) are cytoplasmic. Residues 153 to 173 (AIMGLAFTWLMAMACAAPPLV) traverse the membrane as a helical segment. The Extracellular portion of the chain corresponds to 174 to 202 (GWSRYIPEGMQCSCGIDYYTRAEGFNNES). Residue Asn200 is glycosylated (N-linked (GlcNAc...) asparagine). Residues 203–224 (FVIYMFVCHFLIPLMVVFFCYG) traverse the membrane as a helical segment. Residues 225–252 (RLLCAVKEAAAAQQESETTQRAEREVTR) lie on the Cytoplasmic side of the membrane. A helical transmembrane segment spans residues 253–274 (MVVIMVIAFLICWCPYAGVAWW). The Extracellular segment spans residues 275–286 (IFTHQGSDFGPV). A helical membrane pass occupies residues 287–308 (FMTIPAFFAKSSSIYNPMIYIC). Position 296 is an N6-(retinylidene)lysine (Lys296). Over 309 to 353 (LNKQFRHCMITTLCCGKNPFEEEEGASTASKTEASSVSSSSVSPA) the chain is Cytoplasmic. 2 S-palmitoyl cysteine lipidation sites follow: Cys322 and Cys323. The disordered stretch occupies residues 331–353 (EEGASTASKTEASSVSSSSVSPA). Over residues 334–353 (ASTASKTEASSVSSSSVSPA) the composition is skewed to low complexity.

It belongs to the G-protein coupled receptor 1 family. Opsin subfamily. Post-translationally, phosphorylated on some or all of the serine and threonine residues present in the C-terminal region. In terms of processing, contains one covalently linked retinal chromophore.

Its subcellular location is the membrane. The protein localises to the cell projection. It is found in the cilium. The protein resides in the photoreceptor outer segment. Photoreceptor required for image-forming vision at low light intensity. While most salt water fish species use retinal as chromophore, most freshwater fish use 3-dehydroretinal, or a mixture of retinal and 3-dehydroretinal. Light-induced isomerization of 11-cis to all-trans retinal triggers a conformational change that activates signaling via G-proteins. Subsequent receptor phosphorylation mediates displacement of the bound G-protein alpha subunit by arrestin and terminates signaling. The protein is Rhodopsin (rho) of Lithognathus mormyrus (Striped seabream).